The primary structure comprises 379 residues: Cobalt-precorrin-5B C(1)-methyltransferase (379 aa).

This sequence belongs to the CbiD family.

The enzyme catalyses Co-precorrin-5B + S-adenosyl-L-methionine = Co-precorrin-6A + S-adenosyl-L-homocysteine. It participates in cofactor biosynthesis; adenosylcobalamin biosynthesis; cob(II)yrinate a,c-diamide from sirohydrochlorin (anaerobic route): step 6/10. Functionally, catalyzes the methylation of C-1 in cobalt-precorrin-5B to form cobalt-precorrin-6A. The polypeptide is Cobalt-precorrin-5B C(1)-methyltransferase (Salmonella dublin (strain CT_02021853)).